The primary structure comprises 416 residues: (S)-ureidoglycine--glyoxylate transaminase (416 aa).

Residue lysine 198 is modified to N6-(pyridoxal phosphate)lysine.

It belongs to the class-V pyridoxal-phosphate-dependent aminotransferase family. As to quaternary structure, homodimer. Pyridoxal 5'-phosphate is required as a cofactor.

It catalyses the reaction (S)-2-ureidoglycine + glyoxylate = N-carbamoyl-2-oxoglycine + glycine. It participates in nitrogen metabolism; (S)-allantoin degradation. Functionally, catalyzes the transamination between an unstable intermediate ((S)-ureidoglycine) and the end product of purine catabolism (glyoxylate) to yield oxalurate and glycine. Glyoxylate is the preferred substrate, but other amino-group acceptors can be used. The chain is (S)-ureidoglycine--glyoxylate transaminase from Bacillus subtilis (strain 168).